The chain runs to 382 residues: D-galactonate dehydratase (382 aa).

A Mg(2+)-binding site is contributed by Asp-183. His-185 serves as the catalytic Proton donor. Mg(2+) contacts are provided by Glu-209 and Glu-235. The active-site Proton acceptor is the His-285.

Belongs to the mandelate racemase/muconate lactonizing enzyme family. GalD subfamily. Requires Mg(2+) as cofactor.

It catalyses the reaction D-galactonate = 2-dehydro-3-deoxy-D-galactonate + H2O. Its pathway is carbohydrate acid metabolism; D-galactonate degradation; D-glyceraldehyde 3-phosphate and pyruvate from D-galactonate: step 1/3. Its function is as follows. Catalyzes the dehydration of D-galactonate to 2-keto-3-deoxy-D-galactonate. The sequence is that of D-galactonate dehydratase from Escherichia coli O45:K1 (strain S88 / ExPEC).